A 299-amino-acid polypeptide reads, in one-letter code: NAD kinase (299 aa).

The active-site Proton acceptor is Asp-71. Residues Asp-71–Gly-72, Asn-145–Asp-146, Arg-173, Asp-175, Thr-186–Ser-191, Ala-210, and Gln-248 contribute to the NAD(+) site.

The protein belongs to the NAD kinase family. A divalent metal cation is required as a cofactor.

The protein localises to the cytoplasm. The enzyme catalyses NAD(+) + ATP = ADP + NADP(+) + H(+). Its function is as follows. Involved in the regulation of the intracellular balance of NAD and NADP, and is a key enzyme in the biosynthesis of NADP. Catalyzes specifically the phosphorylation on 2'-hydroxyl of the adenosine moiety of NAD to yield NADP. The polypeptide is NAD kinase (Bordetella avium (strain 197N)).